The chain runs to 372 residues: Phospho-N-acetylmuramoyl-pentapeptide-transferase (372 aa).

10 consecutive transmembrane segments (helical) span residues 25–45 (RSLL…PVMI), 73–93 (TMGG…WADL), 98–118 (VWIV…DDWI), 134–154 (FFWT…IAQN), 176–196 (SIPL…YLVI), 211–231 (GLAI…AYLA), 251–271 (LVVI…YNAH), 275–295 (IFMG…IAVM), 300–320 (IVFA…FLQI), and 349–369 (QVVT…LMTL).

This sequence belongs to the glycosyltransferase 4 family. MraY subfamily. It depends on Mg(2+) as a cofactor.

It localises to the cell inner membrane. It carries out the reaction UDP-N-acetyl-alpha-D-muramoyl-L-alanyl-gamma-D-glutamyl-meso-2,6-diaminopimeloyl-D-alanyl-D-alanine + di-trans,octa-cis-undecaprenyl phosphate = di-trans,octa-cis-undecaprenyl diphospho-N-acetyl-alpha-D-muramoyl-L-alanyl-D-glutamyl-meso-2,6-diaminopimeloyl-D-alanyl-D-alanine + UMP. The protein operates within cell wall biogenesis; peptidoglycan biosynthesis. Functionally, catalyzes the initial step of the lipid cycle reactions in the biosynthesis of the cell wall peptidoglycan: transfers peptidoglycan precursor phospho-MurNAc-pentapeptide from UDP-MurNAc-pentapeptide onto the lipid carrier undecaprenyl phosphate, yielding undecaprenyl-pyrophosphoryl-MurNAc-pentapeptide, known as lipid I. The protein is Phospho-N-acetylmuramoyl-pentapeptide-transferase of Acinetobacter baylyi (strain ATCC 33305 / BD413 / ADP1).